A 529-amino-acid polypeptide reads, in one-letter code: MAPARTMARARLAPAGIPAVALWLLCTLGLQGTQAGPPPAPPGLPAGADCLNSFTAGVPGFVLDTNASVSNGATFLESPTVRRGWDCVRACCTTQNCNLALVELQPDRGEDAIAACFLINCLYEQNFVCKFAPREGFINYLTREVYRSYRQLRTQGFGGSGIPKAWAGIDLKVQPQEPLVLKDVENTDWRLLRGDTDVRVERKDPNQVELWGLKEGTYLFQLTVTSSDHPEDTANVTVTVLSTKQTEDYCLASNKVGRCRGSFPRWYYDPTEQICKSFVYGGCLGNKNNYLREEECILACRGVQGGPLRGSSGAQATFPQGPSMERRHPVCSGTCQPTQFRCSNGCCIDSFLECDDTPNCPDASDEAACEKYTSGFDELQRIHFPSDKGHCVDLPDTGLCKESIPRWYYNPFSEHCARFTYGGCYGNKNNFEEEQQCLESCRGISKKDVFGLRREIPIPSTGSVEMAVAVFLVICIVVVVAILGYCFFKNQRKDFHGHHHHPPPTPASSTVSTTEDTEHLVYNHTTRPL.

The N-terminal stretch at 1–35 (MAPARTMARARLAPAGIPAVALWLLCTLGLQGTQA) is a signal peptide. The region spanning 57 to 140 (GVPGFVLDTN…FAPREGFINY (84 aa)) is the MANSC domain. N-linked (GlcNAc...) asparagine glycans are attached at residues Asn66 and Asn235. One can recognise a BPTI/Kunitz inhibitor 1 domain in the interval 250–300 (CLASNKVGRCRGSFPRWYYDPTEQICKSFVYGGCLGNKNNYLREEECILAC). Intrachain disulfides connect Cys250/Cys300, Cys259/Cys283, Cys275/Cys296, Cys335/Cys347, Cys342/Cys360, Cys354/Cys369, Cys391/Cys441, Cys400/Cys424, and Cys416/Cys437. An LDL-receptor class A domain is found at 334–370 (TCQPTQFRCSNGCCIDSFLECDDTPNCPDASDEAACE). Positions 391–441 (CVDLPDTGLCKESIPRWYYNPFSEHCARFTYGGCYGNKNNFEEEQQCLESC) constitute a BPTI/Kunitz inhibitor 2 domain. Asn523 carries N-linked (GlcNAc...) asparagine glycosylation.

As to quaternary structure, interacts with HGFAC. Interacts with TMPRSS13; the interaction promotes the phosphorylation and cell membrane localization of TMPRSS13.

Its subcellular location is the secreted. It localises to the cytoplasm. The protein localises to the cell membrane. Inhibitor of HGFAC. Inhibits serine protease activity of ST14/matriptase in vitro. Inhibits serine protease activity of TMPRSS13, via the BPTI/Kunitz inhibitor 1 domain. This is Kunitz-type protease inhibitor 1 (SPINT1) from Homo sapiens (Human).